A 198-amino-acid chain; its full sequence is MSNEENKINEEALKQQDAAEVEVEAVGTDADIEWNEEADESAVKIAELEAALLASEARVKEQQDSVLRAKAEVENMRRRTEQEIDKARKYALNRFAEELLPVIDNLERAIQAADAESEAVKPLLEGVELTHKTFVDVVSKFGLKEINPEGQPFNPEWHQAMSIQESPDHESNTVMFVMQKGYELNGRVIRPAMVMVAK.

Residues 1 to 14 show a composition bias toward basic and acidic residues; that stretch reads MSNEENKINEEALK. The disordered stretch occupies residues 1–20; that stretch reads MSNEENKINEEALKQQDAAE.

This sequence belongs to the GrpE family. In terms of assembly, homodimer.

Its subcellular location is the cytoplasm. Its function is as follows. Participates actively in the response to hyperosmotic and heat shock by preventing the aggregation of stress-denatured proteins, in association with DnaK and GrpE. It is the nucleotide exchange factor for DnaK and may function as a thermosensor. Unfolded proteins bind initially to DnaJ; upon interaction with the DnaJ-bound protein, DnaK hydrolyzes its bound ATP, resulting in the formation of a stable complex. GrpE releases ADP from DnaK; ATP binding to DnaK triggers the release of the substrate protein, thus completing the reaction cycle. Several rounds of ATP-dependent interactions between DnaJ, DnaK and GrpE are required for fully efficient folding. The polypeptide is Protein GrpE (Vibrio vulnificus (strain YJ016)).